Consider the following 201-residue polypeptide: MAEKFIKHTGLVVPLDAANVDTDAIIPKQFLQKVTRTGFGAHLFNDWRFLDEKGQQPNPDFVLNFPQYQGASILLARENFGCGSSREHAPWALTDYGFKVVIAPSFADIFYGNSFNNQLLPVKLSDAEVDELFALVKANPGIHFDVDLEAQEVKAGEKTYHFTIDAFRRHCMMNGLDSIGLTLQHDDAIAAYEAKQPAFMN.

It belongs to the LeuD family. LeuD type 1 subfamily. Heterodimer of LeuC and LeuD.

The enzyme catalyses (2R,3S)-3-isopropylmalate = (2S)-2-isopropylmalate. Its pathway is amino-acid biosynthesis; L-leucine biosynthesis; L-leucine from 3-methyl-2-oxobutanoate: step 2/4. Catalyzes the isomerization between 2-isopropylmalate and 3-isopropylmalate, via the formation of 2-isopropylmaleate. This is 3-isopropylmalate dehydratase small subunit from Escherichia coli O9:H4 (strain HS).